We begin with the raw amino-acid sequence, 364 residues long: 3-dehydroquinate synthase (364 aa).

NAD(+)-binding positions include 71-76 (DGEQYK), 105-109 (GVIGD), 129-130 (TT), K142, K151, and 169-172 (CLKT). E184, H247, and H264 together coordinate Zn(2+).

The protein belongs to the sugar phosphate cyclases superfamily. Dehydroquinate synthase family. Co(2+) serves as cofactor. The cofactor is Zn(2+). Requires NAD(+) as cofactor.

Its subcellular location is the cytoplasm. The enzyme catalyses 7-phospho-2-dehydro-3-deoxy-D-arabino-heptonate = 3-dehydroquinate + phosphate. The protein operates within metabolic intermediate biosynthesis; chorismate biosynthesis; chorismate from D-erythrose 4-phosphate and phosphoenolpyruvate: step 2/7. Functionally, catalyzes the conversion of 3-deoxy-D-arabino-heptulosonate 7-phosphate (DAHP) to dehydroquinate (DHQ). This chain is 3-dehydroquinate synthase, found in Klebsiella pneumoniae (strain 342).